Here is a 135-residue protein sequence, read N- to C-terminus: U-myrmeciitoxin(01)-Mg7a (135 aa).

The signal sequence occupies residues 1 to 21 (MKLSCLSLALAIILLLAIVHS). The propeptide occupies 22-72 (PNMEVKALAGPEADAIGFADAFGEADAFGEADAFGEADAFGEADAFGEADA). The segment at 69-95 (EADAKRSKSSSKTKPKKPKKPKKKIKI) is disordered. Residues 75–93 (SKSSSKTKPKKPKKPKKKI) are compositionally biased toward basic residues. O-linked (GalNAc...) serine glycosylation is present at Ser120. O-linked (GalNAc...) threonine glycans are attached at residues Thr129 and Thr130.

Belongs to the formicidae venom precursor-01 superfamily. Glycosylation is critical to maintaining the aqueous solubility of this protein, but does not directly contribute to its activity. Expressed by the venom gland.

It localises to the secreted. It is found in the target cell membrane. Functionally, neurotoxin that triggers pain behavior and inflammation in mammals, and is paralytic and lethal to insects. Causes a time-dependent increase in cell leak current. May act by targeting membranes. This Myrmecia gulosa (Red bulldog ant) protein is U-myrmeciitoxin(01)-Mg7a.